Consider the following 361-residue polypeptide: Chorismate synthase (361 aa).

Arg48 and Arg54 together coordinate NADP(+). FMN is bound by residues 131-133, 243-244, Gly287, 302-306, and Arg328; these read RSS, NA, and KPTSS.

Belongs to the chorismate synthase family. In terms of assembly, homotetramer. FMNH2 serves as cofactor.

The catalysed reaction is 5-O-(1-carboxyvinyl)-3-phosphoshikimate = chorismate + phosphate. It participates in metabolic intermediate biosynthesis; chorismate biosynthesis; chorismate from D-erythrose 4-phosphate and phosphoenolpyruvate: step 7/7. Catalyzes the anti-1,4-elimination of the C-3 phosphate and the C-6 proR hydrogen from 5-enolpyruvylshikimate-3-phosphate (EPSP) to yield chorismate, which is the branch point compound that serves as the starting substrate for the three terminal pathways of aromatic amino acid biosynthesis. This reaction introduces a second double bond into the aromatic ring system. The protein is Chorismate synthase of Rhodopseudomonas palustris (strain HaA2).